Consider the following 235-residue polypeptide: Futalosine hydrolase (235 aa).

Belongs to the PNP/UDP phosphorylase family. Futalosine hydrolase subfamily.

It carries out the reaction futalosine + H2O = dehypoxanthine futalosine + hypoxanthine. The protein operates within quinol/quinone metabolism; menaquinone biosynthesis. Catalyzes the hydrolysis of futalosine (FL) to dehypoxanthine futalosine (DHFL) and hypoxanthine, a step in the biosynthesis of menaquinone (MK, vitamin K2). Does not accept aminodeoxyfutalosine (AFL) as a substrate. The polypeptide is Futalosine hydrolase (Streptomyces coelicolor (strain ATCC BAA-471 / A3(2) / M145)).